The sequence spans 424 residues: Dihydroorotase (424 aa).

H58 and H60 together coordinate Zn(2+). Substrate is bound by residues 60-62 (HLR), N92, and N276. D303 is a binding site for Zn(2+). D303 is an active-site residue. Substrate contacts are provided by residues H307 and 321–322 (FG).

Belongs to the metallo-dependent hydrolases superfamily. DHOase family. Class I DHOase subfamily. Zn(2+) serves as cofactor.

The catalysed reaction is (S)-dihydroorotate + H2O = N-carbamoyl-L-aspartate + H(+). It functions in the pathway pyrimidine metabolism; UMP biosynthesis via de novo pathway; (S)-dihydroorotate from bicarbonate: step 3/3. Functionally, catalyzes the reversible cyclization of carbamoyl aspartate to dihydroorotate. This chain is Dihydroorotase, found in Staphylococcus aureus (strain COL).